A 616-amino-acid polypeptide reads, in one-letter code: uncharacterized protein (616 aa).

Belongs to the UbiD family.

This is an uncharacterized protein from Helicobacter pylori (strain J99 / ATCC 700824) (Campylobacter pylori J99).